The following is a 424-amino-acid chain: Tyrosine--tRNA ligase (424 aa).

Y37 is an L-tyrosine binding site. A 'HIGH' region motif is present at residues P42–H51. L-tyrosine is bound by residues Y175 and Q179. Residues K235 to T239 carry the 'KMSKS' region motif. K238 contributes to the ATP binding site. The region spanning A357 to G414 is the S4 RNA-binding domain.

This sequence belongs to the class-I aminoacyl-tRNA synthetase family. TyrS type 1 subfamily. As to quaternary structure, homodimer.

It localises to the cytoplasm. It carries out the reaction tRNA(Tyr) + L-tyrosine + ATP = L-tyrosyl-tRNA(Tyr) + AMP + diphosphate + H(+). Functionally, catalyzes the attachment of tyrosine to tRNA(Tyr) in a two-step reaction: tyrosine is first activated by ATP to form Tyr-AMP and then transferred to the acceptor end of tRNA(Tyr). This Sodalis glossinidius (strain morsitans) protein is Tyrosine--tRNA ligase.